The chain runs to 110 residues: Insulin (110 aa).

The first 24 residues, 1–24 (MALWMRLLPLLAFLILWEPSPAHA), serve as a signal peptide directing secretion. Disulfide bonds link Cys31-Cys96, Cys43-Cys109, and Cys95-Cys100. Residues 57–87 (GVDDPQMPQLELGGSPGAGDLRALALEVARQ) constitute a propeptide, c peptide.

Belongs to the insulin family. Heterodimer of a B chain and an A chain linked by two disulfide bonds.

The protein localises to the secreted. In terms of biological role, insulin decreases blood glucose concentration. It increases cell permeability to monosaccharides, amino acids and fatty acids. It accelerates glycolysis, the pentose phosphate cycle, and glycogen synthesis in liver. This Psammomys obesus (Fat sand rat) protein is Insulin (INS).